The chain runs to 86 residues: Cell division topological specificity factor (86 aa).

It belongs to the MinE family.

Its function is as follows. Prevents the cell division inhibition by proteins MinC and MinD at internal division sites while permitting inhibition at polar sites. This ensures cell division at the proper site by restricting the formation of a division septum at the midpoint of the long axis of the cell. The polypeptide is Cell division topological specificity factor (Shewanella sediminis (strain HAW-EB3)).